A 138-amino-acid polypeptide reads, in one-letter code: Protein SPMIP3 (138 aa).

This is Protein SPMIP3 (SPMIP3) from Bos taurus (Bovine).